Consider the following 208-residue polypeptide: EF-hand protein 5 variant 2 (208 aa).

Residues 1–35 (MQARGTVKVQGDANVDGKMSTGQHPHHQHLNSTQA) are disordered. EF-hand domains are found at residues 64–98 (MAEGFYVLSGGYKKLFIPSKDVYALMQNVGMHLTE), 99–134 (EEFHDALRVIGQSEPQNADELSFSDFLLLMTREVDD), 135–170 (TMADELRSAFFHYDKHKTGYVTRKQFTELFATLAER), and 171–206 (STPEELEELLAVAEVDETDDKIDYNRFVNELTSRVN). Residues Glu-118, Asp-123, Asp-148, Thr-152, and Tyr-154 each contribute to the Ca(2+) site.

In Trypanosoma cruzi, this protein is EF-hand protein 5 variant 2.